The following is a 191-amino-acid chain: CASP-like protein 4C3 (191 aa).

The Cytoplasmic portion of the chain corresponds to Met-1–Asn-29. The helical transmembrane segment at Gly-30–Met-50 threads the bilayer. Topologically, residues Gly-51–Arg-72 are extracellular. Residues Tyr-73–Val-93 form a helical membrane-spanning segment. Topologically, residues Tyr-94–Asp-116 are cytoplasmic. Residues Gln-117 to Leu-137 traverse the membrane as a helical segment. The Extracellular portion of the chain corresponds to Gln-138–Ala-162. Residues Ser-163–Leu-183 form a helical membrane-spanning segment. Residues Arg-184–Ser-191 lie on the Cytoplasmic side of the membrane.

This sequence belongs to the Casparian strip membrane proteins (CASP) family. Homodimer and heterodimers.

Its subcellular location is the cell membrane. The protein is CASP-like protein 4C3 of Physcomitrium patens (Spreading-leaved earth moss).